Reading from the N-terminus, the 363-residue chain is Chorismate synthase (363 aa).

NADP(+)-binding residues include Arg-48 and Arg-54. FMN-binding positions include 125 to 127, 237 to 238, Gly-277, 292 to 296, and Arg-318; these read RSS, NA, and KPTSS.

This sequence belongs to the chorismate synthase family. As to quaternary structure, homotetramer. FMNH2 is required as a cofactor.

It catalyses the reaction 5-O-(1-carboxyvinyl)-3-phosphoshikimate = chorismate + phosphate. It participates in metabolic intermediate biosynthesis; chorismate biosynthesis; chorismate from D-erythrose 4-phosphate and phosphoenolpyruvate: step 7/7. Functionally, catalyzes the anti-1,4-elimination of the C-3 phosphate and the C-6 proR hydrogen from 5-enolpyruvylshikimate-3-phosphate (EPSP) to yield chorismate, which is the branch point compound that serves as the starting substrate for the three terminal pathways of aromatic amino acid biosynthesis. This reaction introduces a second double bond into the aromatic ring system. The chain is Chorismate synthase from Pseudomonas putida (strain W619).